The sequence spans 305 residues: Glycine--tRNA ligase alpha subunit (305 aa).

The protein belongs to the class-II aminoacyl-tRNA synthetase family. As to quaternary structure, tetramer of two alpha and two beta subunits.

The protein localises to the cytoplasm. It catalyses the reaction tRNA(Gly) + glycine + ATP = glycyl-tRNA(Gly) + AMP + diphosphate. This is Glycine--tRNA ligase alpha subunit from Streptococcus pneumoniae (strain 70585).